The sequence spans 86 residues: Omega-theraphotoxin-Hhn1d (86 aa).

Positions 1 to 21 (MKSIVFVALFGLALLAVVCSA) are cleaved as a signal peptide. Positions 22 to 50 (SEDAHKELLKEVVRAMVVDKTDAVQAEER) are excised as a propeptide. Intrachain disulfides connect Cys52–Cys66, Cys59–Cys71, and Cys65–Cys78.

It belongs to the neurotoxin 10 (Hwtx-1) family. 17 (Hntx-9) subfamily. Expressed by the venom gland.

It localises to the secreted. In terms of biological role, ion channel inhibitor. In Cyriopagopus hainanus (Chinese bird spider), this protein is Omega-theraphotoxin-Hhn1d.